A 563-amino-acid chain; its full sequence is Pre-hexon-linking protein IIIa (563 aa).

Residues 1–117 (MRKRRTLTAP…ALLHRVSKYN (117 aa)) are peripentonal hexon-tethering domain. The binding to hexon-linking protein stretch occupies residues 148-261 (GSLTALNSFL…FTDSVSISRD (114 aa)). The residue at position 235 (serine 235) is a Phosphoserine; by host. Threonine 284 carries the phosphothreonine; by host modification. The disordered stretch occupies residues 449–471 (RTESRSVSRVPTPASSRRSSVAM). 2 positions are modified to phosphoserine; by host: serine 452 and serine 456. The segment covering 462–471 (ASSRRSSVAM) has biased composition (low complexity). A phosphoserine; by host mark is found at serine 475 and serine 486. A disordered region spans residues 524-543 (SSAISSDESDDGMSKPDKFL). The propeptide occupies 549-563 (GNPFAHLRPKLGRCL).

Belongs to the adenoviridae hexon-linking protein IIIa family. As to quaternary structure, interacts with hexon proteins; this interaction tethers the peripentonal hexons to hexons situated in the facet. Interacts with the penton protein (via N-terminus). Interacts with packaging protein 3; this interaction is required to promote correct genome packaging. In terms of processing, cleaved near the C-terminus by the viral protease during virion maturation to form the mature protein.

The protein localises to the virion. Its subcellular location is the host nucleus. Its function is as follows. Structural component of the virion that acts as a cement protein on the capsid exterior which mediates the interactions between the hexons, including the peripentonal hexons, and reaches all the way to the penton vertices. Two hexon linking proteins IIIa, one from each facet, stabilize the unique edge interface between a pair of facets. As the virus enters the host cell, hexon linking proteins IIIa are shed concomitant with virion acidification in the endosome. During virus assembly, seems to play a role in the serotype specificity of the packaging of viral DNA via its interaction with packaging protein 3. The protein is Pre-hexon-linking protein IIIa of Canis lupus familiaris (Dog).